Consider the following 323-residue polypeptide: Acetyl-coenzyme A carboxylase carboxyl transferase subunit alpha (323 aa).

The region spanning 39-293 is the CoA carboxyltransferase C-terminal domain; that stretch reads RLAGKSQQLT…KRSLAESLRQ (255 aa).

Belongs to the AccA family. As to quaternary structure, acetyl-CoA carboxylase is a heterohexamer composed of biotin carboxyl carrier protein (AccB), biotin carboxylase (AccC) and two subunits each of ACCase subunit alpha (AccA) and ACCase subunit beta (AccD).

It localises to the cytoplasm. The enzyme catalyses N(6)-carboxybiotinyl-L-lysyl-[protein] + acetyl-CoA = N(6)-biotinyl-L-lysyl-[protein] + malonyl-CoA. It participates in lipid metabolism; malonyl-CoA biosynthesis; malonyl-CoA from acetyl-CoA: step 1/1. Its function is as follows. Component of the acetyl coenzyme A carboxylase (ACC) complex. First, biotin carboxylase catalyzes the carboxylation of biotin on its carrier protein (BCCP) and then the CO(2) group is transferred by the carboxyltransferase to acetyl-CoA to form malonyl-CoA. The polypeptide is Acetyl-coenzyme A carboxylase carboxyl transferase subunit alpha (Cupriavidus necator (strain ATCC 17699 / DSM 428 / KCTC 22496 / NCIMB 10442 / H16 / Stanier 337) (Ralstonia eutropha)).